The chain runs to 1060 residues: Carbamoyl phosphate synthase large chain (1060 aa).

The tract at residues 1 to 401 is carboxyphosphate synthetic domain; sequence MPKRTDIKKI…SLLKAVRSLE (401 aa). ATP contacts are provided by R129, R169, G175, G176, K208, I210, E215, G241, I242, H243, Q284, and E298. Positions 133 to 327 constitute an ATP-grasp 1 domain; the sequence is KQLMEELEQP…IAKLAAKIAV (195 aa). 3 residues coordinate Mg(2+): Q284, E298, and N300. Q284, E298, and N300 together coordinate Mn(2+). The segment at 402-546 is oligomerization domain; that stretch reads IGAYHNELAE…YSTYEVENES (145 aa). The tract at residues 547–929 is carbamoyl phosphate synthetic domain; it reads NVSKKPSVLV…ALYKAFEASG (383 aa). Residues 671-861 form the ATP-grasp 2 domain; that stretch reads EQALQELAIP…MAQVATKAIL (191 aa). ATP-binding residues include R707, S746, L748, E752, G777, V778, H779, S780, Q820, and E832. The Mg(2+) site is built by Q820, E832, and N834. Mn(2+) is bound by residues Q820, E832, and N834. Positions 930 to 1060 constitute an MGS-like domain; it reads LHLPSYGAVL…ESRAFTTEAI (131 aa). An allosteric domain region spans residues 930–1060; the sequence is LHLPSYGAVL…ESRAFTTEAI (131 aa).

It belongs to the CarB family. As to quaternary structure, composed of two chains; the small (or glutamine) chain promotes the hydrolysis of glutamine to ammonia, which is used by the large (or ammonia) chain to synthesize carbamoyl phosphate. Tetramer of heterodimers (alpha,beta)4. The cofactor is Mg(2+). Mn(2+) is required as a cofactor.

It carries out the reaction hydrogencarbonate + L-glutamine + 2 ATP + H2O = carbamoyl phosphate + L-glutamate + 2 ADP + phosphate + 2 H(+). The enzyme catalyses hydrogencarbonate + NH4(+) + 2 ATP = carbamoyl phosphate + 2 ADP + phosphate + 2 H(+). It participates in amino-acid biosynthesis; L-arginine biosynthesis; carbamoyl phosphate from bicarbonate: step 1/1. It functions in the pathway pyrimidine metabolism; UMP biosynthesis via de novo pathway; (S)-dihydroorotate from bicarbonate: step 1/3. Functionally, large subunit of the glutamine-dependent carbamoyl phosphate synthetase (CPSase). CPSase catalyzes the formation of carbamoyl phosphate from the ammonia moiety of glutamine, carbonate, and phosphate donated by ATP, constituting the first step of 2 biosynthetic pathways, one leading to arginine and/or urea and the other to pyrimidine nucleotides. The large subunit (synthetase) binds the substrates ammonia (free or transferred from glutamine from the small subunit), hydrogencarbonate and ATP and carries out an ATP-coupled ligase reaction, activating hydrogencarbonate by forming carboxy phosphate which reacts with ammonia to form carbamoyl phosphate. The sequence is that of Carbamoyl phosphate synthase large chain from Enterococcus faecalis (strain ATCC 700802 / V583).